The sequence spans 100 residues: MICOS complex subunit MIC12 (100 aa).

The chain crosses the membrane as a helical span at residues 10-26 (FATISSVAAASLYLYAI).

This sequence belongs to the MICOS complex subunit Mic12 family. In terms of assembly, component of the mitochondrial contact site and cristae organizing system (MICOS) complex.

It is found in the mitochondrion inner membrane. In terms of biological role, component of the MICOS complex, a large protein complex of the mitochondrial inner membrane that plays crucial roles in the maintenance of crista junctions, inner membrane architecture, and formation of contact sites to the outer membrane. The chain is MICOS complex subunit MIC12 (AIM5) from Vanderwaltozyma polyspora (strain ATCC 22028 / DSM 70294 / BCRC 21397 / CBS 2163 / NBRC 10782 / NRRL Y-8283 / UCD 57-17) (Kluyveromyces polysporus).